The primary structure comprises 338 residues: Nodulation outer protein L (338 aa).

Polar residues predominate over residues 1 to 14 (MDINSTSPLNASPQ). Disordered regions lie at residues 1-48 (MDIN…LPQV), 85-158 (TRER…DLET), 187-209 (SPAP…PHAR), and 230-259 (PQAG…SSAG). Positions 85 to 97 (TRERSPHPSEQRP) are enriched in basic and acidic residues. The span at 126-138 (VGPSRSGPSQAGL) shows a compositional bias: polar residues. Over residues 242–258 (SGPSQARPSHAWPSSSA) the composition is skewed to polar residues.

It localises to the secreted. Putative symbiotic effector that modulates nodulation in legumes. When delivered into the plant cell, modulates the activity of signal transduction pathways that culminate in activation of PR proteins. The protein is Nodulation outer protein L (nopL) of Sinorhizobium fredii (strain NBRC 101917 / NGR234).